The sequence spans 104 residues: MLFTDYMANFLVGYFSVLSSIMPLLAETSSTGEGLKLLGAGVAIIGVAGAGIGQGAVGQGACMAIGRNPEMAPKITSTMIIAAGIAESGAIYALVVAILLIFVA.

A run of 2 helical transmembrane segments spans residues 37-57 and 83-103; these read LLGA…QGAV and AGIA…LIFV.

Belongs to the ATPase C chain family. In terms of assembly, F-type ATPases have 2 components, F(1) - the catalytic core - and F(0) - the membrane proton channel. F(1) has five subunits: alpha(3), beta(3), gamma(1), delta(1), epsilon(1). F(0) has three main subunits: a(1), b(2) and c(10-14). The alpha and beta chains form an alternating ring which encloses part of the gamma chain. F(1) is attached to F(0) by a central stalk formed by the gamma and epsilon chains, while a peripheral stalk is formed by the delta and b chains.

It localises to the cell membrane. Functionally, f(1)F(0) ATP synthase produces ATP from ADP in the presence of a proton or sodium gradient. F-type ATPases consist of two structural domains, F(1) containing the extramembraneous catalytic core and F(0) containing the membrane proton channel, linked together by a central stalk and a peripheral stalk. During catalysis, ATP synthesis in the catalytic domain of F(1) is coupled via a rotary mechanism of the central stalk subunits to proton translocation. Its function is as follows. Key component of the F(0) channel; it plays a direct role in translocation across the membrane. A homomeric c-ring of between 10-14 subunits forms the central stalk rotor element with the F(1) delta and epsilon subunits. This is ATP synthase subunit c from Mesoplasma florum (strain ATCC 33453 / NBRC 100688 / NCTC 11704 / L1) (Acholeplasma florum).